We begin with the raw amino-acid sequence, 153 residues long: UPF0756 membrane protein LCA_1031 (153 aa).

4 helical membrane-spanning segments follow: residues 4-24, 52-72, 85-105, and 115-135; these read WLFLAAILIVALLAKNQSLII, WGVTVISVAILVPIATGQIGF, FIAVGCGVLVAVLSAKGVGLL, and LVFGTIMGVVFLKGIAAGPVI.

Belongs to the UPF0756 family.

The protein resides in the cell membrane. The polypeptide is UPF0756 membrane protein LCA_1031 (Latilactobacillus sakei subsp. sakei (strain 23K) (Lactobacillus sakei subsp. sakei)).